The sequence spans 500 residues: MTLVDVRTPDPKRFIPGATGDWEVIVGMEVHAQVLSNSKLFSGASTEFGKPQNSNVSLVDAAMPGMLPVINEECVRQAVRTGLGLKAQINKRSLFDRKNYFYPDLPQGYQISQFKDPIVGEGKIVISLGPDRQGQFEDIEIGIERLHLEQDAGKSLHDQHATMSYVDLNRSGVALMEIVSKPDMRSSDEAKAYMTKLRSIVRYLGTCDGNMDEGSMRADVNVSVRRPGEGFGTRCEIKNVNSIRFIGQAIEYEARRQIGILEDGGTIEQETRLFDPNKGETRSMRSKEDAHDYRYFPDPDLLPLEFDDAFVSALAVDLPELPDDKKERFVRELGLSIYDASVLVSEKAIADYFEAVAAGRDGKTAANWVINDLLGALNRTGKDIEQTPVSPAQLGAIIDLIKAGTISGKIAKDLFEIVLTEGGDPAEIVDARGMKQVTDTGAIEKAVDEIIAANPDQVEKVKAKPTLAAWFVGQVMKATGGKANPQAVQALVKAKLGIEE.

Belongs to the GatB/GatE family. GatB subfamily. Heterotrimer of A, B and C subunits.

The enzyme catalyses L-glutamyl-tRNA(Gln) + L-glutamine + ATP + H2O = L-glutaminyl-tRNA(Gln) + L-glutamate + ADP + phosphate + H(+). It catalyses the reaction L-aspartyl-tRNA(Asn) + L-glutamine + ATP + H2O = L-asparaginyl-tRNA(Asn) + L-glutamate + ADP + phosphate + 2 H(+). Allows the formation of correctly charged Asn-tRNA(Asn) or Gln-tRNA(Gln) through the transamidation of misacylated Asp-tRNA(Asn) or Glu-tRNA(Gln) in organisms which lack either or both of asparaginyl-tRNA or glutaminyl-tRNA synthetases. The reaction takes place in the presence of glutamine and ATP through an activated phospho-Asp-tRNA(Asn) or phospho-Glu-tRNA(Gln). In Rhizobium leguminosarum bv. trifolii (strain WSM2304), this protein is Aspartyl/glutamyl-tRNA(Asn/Gln) amidotransferase subunit B.